A 179-amino-acid polypeptide reads, in one-letter code: ATP-dependent protease subunit HslV (179 aa).

The active site involves threonine 7. Na(+) contacts are provided by glycine 162, cysteine 165, and threonine 168.

The protein belongs to the peptidase T1B family. HslV subfamily. As to quaternary structure, a double ring-shaped homohexamer of HslV is capped on each side by a ring-shaped HslU homohexamer. The assembly of the HslU/HslV complex is dependent on binding of ATP.

The protein resides in the cytoplasm. It carries out the reaction ATP-dependent cleavage of peptide bonds with broad specificity.. Its activity is regulated as follows. Allosterically activated by HslU binding. Protease subunit of a proteasome-like degradation complex believed to be a general protein degrading machinery. The sequence is that of ATP-dependent protease subunit HslV from Bordetella bronchiseptica (strain ATCC BAA-588 / NCTC 13252 / RB50) (Alcaligenes bronchisepticus).